The following is a 178-amino-acid chain: UPF0215 protein STK_03040 (178 aa).

This sequence belongs to the UPF0215 family.

This is UPF0215 protein STK_03040 from Sulfurisphaera tokodaii (strain DSM 16993 / JCM 10545 / NBRC 100140 / 7) (Sulfolobus tokodaii).